The primary structure comprises 327 residues: Phenylalanine--tRNA ligase alpha subunit (327 aa).

Glu252 provides a ligand contact to Mg(2+).

The protein belongs to the class-II aminoacyl-tRNA synthetase family. Phe-tRNA synthetase alpha subunit type 1 subfamily. In terms of assembly, tetramer of two alpha and two beta subunits. Mg(2+) serves as cofactor.

The protein resides in the cytoplasm. The catalysed reaction is tRNA(Phe) + L-phenylalanine + ATP = L-phenylalanyl-tRNA(Phe) + AMP + diphosphate + H(+). The protein is Phenylalanine--tRNA ligase alpha subunit of Shewanella denitrificans (strain OS217 / ATCC BAA-1090 / DSM 15013).